Consider the following 829-residue polypeptide: pre-rRNA 2'-O-ribose RNA methyltransferase FTSJ3 (829 aa).

5 residues coordinate S-adenosyl-L-methionine: Gly56, Trp58, Asp76, Asp92, and Asp117. Lys157 serves as the catalytic Proton acceptor. Positions 332-367 (ISLSSEEEGDEEESAAETKQASEEEEEREEEEQLNR) are disordered. Phosphoserine is present on residues Ser333, Ser335, Ser336, Ser345, and Ser353. Positions 336–346 (SEEEGDEEESA) are enriched in acidic residues. Acidic residues predominate over residues 354-363 (EEEEEREEEE). Arg389 bears the Citrulline mark. Disordered regions lie at residues 443-508 (FLSD…PLLV) and 528-634 (DGFS…GFEV). Acidic residues predominate over residues 456–473 (DAEDDDDTSLESDLDPEE). 2 positions are modified to phosphoserine: Ser531 and Ser544. Lys570 participates in a covalent cross-link: Glycyl lysine isopeptide (Lys-Gly) (interchain with G-Cter in SUMO2). Ser575 is subject to Phosphoserine. Residues Lys626 and Lys642 each participate in a glycyl lysine isopeptide (Lys-Gly) (interchain with G-Cter in SUMO2) cross-link. Ser659 carries the phosphoserine modification. Lys661 participates in a covalent cross-link: Glycyl lysine isopeptide (Lys-Gly) (interchain with G-Cter in SUMO2). A Phosphoserine modification is found at Ser671. Residue Lys693 forms a Glycyl lysine isopeptide (Lys-Gly) (interchain with G-Cter in SUMO2) linkage. Residues 722–760 (IKKVAEAKARKKRRMLKKLEQTKKKAEAVVNTVDISERE) are a coiled coil. Arg766 bears the Citrulline mark. A compositionally biased stretch (basic residues) spans 794–804 (VRRPAGVRGHF). The disordered stretch occupies residues 794 to 829 (VRRPAGVRGHFKVVDSRMKKDQRAQRKEQKRNHRRK). The span at 805–820 (KVVDSRMKKDQRAQRK) shows a compositional bias: basic and acidic residues.

It belongs to the class I-like SAM-binding methyltransferase superfamily. RNA methyltransferase RlmE family. SPB1 subfamily. As to quaternary structure, interacts with NIP7. In terms of processing, citrullinated by PADI4.

It is found in the nucleus. Its subcellular location is the nucleolus. It carries out the reaction a ribonucleotide in rRNA + S-adenosyl-L-methionine = a 2'-O-methylribonucleotide in rRNA + S-adenosyl-L-homocysteine + H(+). In terms of biological role, RNA 2'-O-methyltransferase involved in the processing of the 34S pre-rRNA to 18S rRNA and in 40S ribosomal subunit formation. The chain is pre-rRNA 2'-O-ribose RNA methyltransferase FTSJ3 (Ftsj3) from Rattus norvegicus (Rat).